The sequence spans 487 residues: Aspartyl/glutamyl-tRNA(Asn/Gln) amidotransferase subunit B (487 aa).

The protein belongs to the GatB/GatE family. GatB subfamily. Heterotrimer of A, B and C subunits.

It catalyses the reaction L-glutamyl-tRNA(Gln) + L-glutamine + ATP + H2O = L-glutaminyl-tRNA(Gln) + L-glutamate + ADP + phosphate + H(+). The enzyme catalyses L-aspartyl-tRNA(Asn) + L-glutamine + ATP + H2O = L-asparaginyl-tRNA(Asn) + L-glutamate + ADP + phosphate + 2 H(+). Functionally, allows the formation of correctly charged Asn-tRNA(Asn) or Gln-tRNA(Gln) through the transamidation of misacylated Asp-tRNA(Asn) or Glu-tRNA(Gln) in organisms which lack either or both of asparaginyl-tRNA or glutaminyl-tRNA synthetases. The reaction takes place in the presence of glutamine and ATP through an activated phospho-Asp-tRNA(Asn) or phospho-Glu-tRNA(Gln). The chain is Aspartyl/glutamyl-tRNA(Asn/Gln) amidotransferase subunit B from Acidiphilium cryptum (strain JF-5).